Reading from the N-terminus, the 547-residue chain is ATP synthase subunit alpha (547 aa).

Residue 172–179 participates in ATP binding; that stretch reads GDRKTGKT.

This sequence belongs to the ATPase alpha/beta chains family. F-type ATPases have 2 components, CF(1) - the catalytic core - and CF(0) - the membrane proton channel. CF(1) has five subunits: alpha(3), beta(3), gamma(1), delta(1), epsilon(1). CF(0) has three main subunits: a(1), b(2) and c(9-12). The alpha and beta chains form an alternating ring which encloses part of the gamma chain. CF(1) is attached to CF(0) by a central stalk formed by the gamma and epsilon chains, while a peripheral stalk is formed by the delta and b chains.

It localises to the cell membrane. It carries out the reaction ATP + H2O + 4 H(+)(in) = ADP + phosphate + 5 H(+)(out). Its function is as follows. Produces ATP from ADP in the presence of a proton gradient across the membrane. The alpha chain is a regulatory subunit. The chain is ATP synthase subunit alpha from Rhodococcus erythropolis (strain PR4 / NBRC 100887).